A 522-amino-acid chain; its full sequence is N-acetylgalactosamine-6-sulfatase (522 aa).

The first 25 residues, 1–25 (MAPVAAATGWRLLLVLSAAGLGAAG), serve as a signal peptide directing secretion. The segment at 27-379 (PQPPNILLLL…PAMLGGQLTD (353 aa)) is catalytic domain. 3 residues coordinate Ca(2+): Asp-38, Asp-39, and Cys-78. Residue Cys-78 is the Nucleophile of the active site. Cys-78 bears the 3-oxoalanine (Cys) mark. The active site involves His-141. The N-linked (GlcNAc...) asparagine glycan is linked to Asn-203. Positions 288 and 289 each coordinate Ca(2+). An intrachain disulfide couples Cys-308 to Cys-419. A glycan (N-linked (GlcNAc...) asparagine) is linked at Asn-423. Cystine bridges form between Cys-489/Cys-518 and Cys-501/Cys-507.

Belongs to the sulfatase family. Homodimer. Ca(2+) serves as cofactor. In terms of processing, the conversion to 3-oxoalanine (also known as C-formylglycine, FGly), of a serine or cysteine residue in prokaryotes and of a cysteine residue in eukaryotes, is critical for catalytic activity.

The protein localises to the lysosome. The enzyme catalyses Hydrolysis of the 6-sulfate groups of the N-acetyl-D-galactosamine 6-sulfate units of chondroitin sulfate and of the D-galactose 6-sulfate units of keratan sulfate.. The sequence is that of N-acetylgalactosamine-6-sulfatase (GALNS) from Canis lupus familiaris (Dog).